A 208-amino-acid chain; its full sequence is Octanoyltransferase (208 aa).

Residues 31–208 form the BPL/LPL catalytic domain; the sequence is GSEREMVWLL…LKKEFYKVFA (178 aa). Substrate contacts are provided by residues 70 to 77, 142 to 144, and 155 to 157; these read RGGKYSYH, AFG, and GVA. Cys-173 acts as the Acyl-thioester intermediate in catalysis.

The protein belongs to the LipB family.

It is found in the cytoplasm. The catalysed reaction is octanoyl-[ACP] + L-lysyl-[protein] = N(6)-octanoyl-L-lysyl-[protein] + holo-[ACP] + H(+). It functions in the pathway protein modification; protein lipoylation via endogenous pathway; protein N(6)-(lipoyl)lysine from octanoyl-[acyl-carrier-protein]: step 1/2. Catalyzes the transfer of endogenously produced octanoic acid from octanoyl-acyl-carrier-protein onto the lipoyl domains of lipoate-dependent enzymes. Lipoyl-ACP can also act as a substrate although octanoyl-ACP is likely to be the physiological substrate. The chain is Octanoyltransferase from Anaplasma phagocytophilum (strain HZ).